We begin with the raw amino-acid sequence, 272 residues long: Indole-3-glycerol phosphate synthase (272 aa).

Belongs to the TrpC family.

It carries out the reaction 1-(2-carboxyphenylamino)-1-deoxy-D-ribulose 5-phosphate + H(+) = (1S,2R)-1-C-(indol-3-yl)glycerol 3-phosphate + CO2 + H2O. It functions in the pathway amino-acid biosynthesis; L-tryptophan biosynthesis; L-tryptophan from chorismate: step 4/5. This is Indole-3-glycerol phosphate synthase from Mycolicibacterium smegmatis (strain ATCC 700084 / mc(2)155) (Mycobacterium smegmatis).